A 130-amino-acid polypeptide reads, in one-letter code: S-adenosylmethionine decarboxylase proenzyme (130 aa).

The active-site Schiff-base intermediate with substrate; via pyruvic acid is the serine 66. Residue serine 66 is modified to Pyruvic acid (Ser); by autocatalysis. Histidine 71 functions as the Proton acceptor; for processing activity in the catalytic mechanism. The active-site Proton donor; for catalytic activity is cysteine 86.

This sequence belongs to the prokaryotic AdoMetDC family. Type 1 subfamily. In terms of assembly, heterotetramer of two alpha and two beta chains arranged as a dimer of alpha/beta heterodimers. It depends on pyruvate as a cofactor. In terms of processing, is synthesized initially as an inactive proenzyme. Formation of the active enzyme involves a self-maturation process in which the active site pyruvoyl group is generated from an internal serine residue via an autocatalytic post-translational modification. Two non-identical subunits are generated from the proenzyme in this reaction, and the pyruvate is formed at the N-terminus of the alpha chain, which is derived from the carboxyl end of the proenzyme. The post-translation cleavage follows an unusual pathway, termed non-hydrolytic serinolysis, in which the side chain hydroxyl group of the serine supplies its oxygen atom to form the C-terminus of the beta chain, while the remainder of the serine residue undergoes an oxidative deamination to produce ammonia and the pyruvoyl group blocking the N-terminus of the alpha chain.

It catalyses the reaction S-adenosyl-L-methionine + H(+) = S-adenosyl 3-(methylsulfanyl)propylamine + CO2. The protein operates within amine and polyamine biosynthesis; S-adenosylmethioninamine biosynthesis; S-adenosylmethioninamine from S-adenosyl-L-methionine: step 1/1. Its function is as follows. Catalyzes the decarboxylation of S-adenosylmethionine to S-adenosylmethioninamine (dcAdoMet), the propylamine donor required for the synthesis of the polyamines spermine and spermidine from the diamine putrescine. This Bacillus cytotoxicus (strain DSM 22905 / CIP 110041 / 391-98 / NVH 391-98) protein is S-adenosylmethionine decarboxylase proenzyme.